A 271-amino-acid polypeptide reads, in one-letter code: Putative two-component membrane permease complex subunit SMU_746c (271 aa).

2 helical membrane-spanning segments follow: residues 34-54 (LAYI…TIWM) and 70-90 (FFSP…PTVP).

The protein belongs to the UPF0703 family. As to quaternary structure, interacts with SMU_747c.

Its subcellular location is the cell membrane. Could be part of a two-component membrane permease system responsible for amino acid transport under low pH. Involved in acidogenesis, biofilm formation and low-pH survival. The polypeptide is Putative two-component membrane permease complex subunit SMU_746c (Streptococcus mutans serotype c (strain ATCC 700610 / UA159)).